The primary structure comprises 328 residues: D-cysteine desulfhydrase (328 aa).

Lys51 carries the post-translational modification N6-(pyridoxal phosphate)lysine.

Belongs to the ACC deaminase/D-cysteine desulfhydrase family. As to quaternary structure, homodimer. The cofactor is pyridoxal 5'-phosphate.

The catalysed reaction is D-cysteine + H2O = hydrogen sulfide + pyruvate + NH4(+) + H(+). Functionally, catalyzes the alpha,beta-elimination reaction of D-cysteine and of several D-cysteine derivatives. It could be a defense mechanism against D-cysteine. The chain is D-cysteine desulfhydrase from Escherichia coli O9:H4 (strain HS).